The sequence spans 92 residues: UPF0250 protein Smlt4048 (92 aa).

It belongs to the UPF0250 family.

This chain is UPF0250 protein Smlt4048, found in Stenotrophomonas maltophilia (strain K279a).